Reading from the N-terminus, the 86-residue chain is Small ribosomal subunit protein bS20 (86 aa).

Residues 1 to 27 (MANSKQAKKRAGQSEKRRQHNASRRSM) form a disordered region.

This sequence belongs to the bacterial ribosomal protein bS20 family.

Functionally, binds directly to 16S ribosomal RNA. The protein is Small ribosomal subunit protein bS20 of Colwellia psychrerythraea (strain 34H / ATCC BAA-681) (Vibrio psychroerythus).